Here is a 95-residue protein sequence, read N- to C-terminus: uncharacterized protein (95 aa).

This is an uncharacterized protein from Caenorhabditis elegans.